Reading from the N-terminus, the 637-residue chain is MPNVKLPDGNVKHFEAPLTIYDVAHHISPGLAKAAIAGRVDGVLVDTSYLIKEDCSLIIVTEKHEDSLEIIRHSTAHLLAQAVKALFPSAQVTIGPVIEDGFYYDFAFERSFTPDDLSLIEAKMHELAKANLSITRRELPRNEAIQYFKDLGEEYKAKIIADIPENEALSLYRQGDFEDLCRGPHVPSTGFLKAFKLTKVAGAYWRGDSNNEMLQRIYGTAWADKKSLEEYLFRLEEAEKRDHRKLGKALDLFHFQDIAPGMVFWHPKGWTIYQELEHYMRNRLVDFGYQEIRTPQLVDRSLWEKSGHWANFRDEMFVTETENRHYAVKPMSCPCHVQIYNHGLKSYRDLPLRLSEFGNCHRCEPSGALHGLMRVRNMVQDDAHIFCTEDQIQSEVAMMLELVQSVYKDFGFTEIKYRLALRPEKRVGSDDVWDKAETALKLAMQGRNIEWVDAPGEGAFYGPKIECSLSDCLGRIWQCGTIQVDFSMPARLEASYVAEDGSKQTPVMLHRAILGSFERFMGILIEHYAGKLPLWLSPVQAIVLTISEKQNEYAEKVRKTLQKRGIRANFDLRNEKIGFKIREHTLQKIPYLLVVGDKEVENCQVAVRTRDGIDLGVMTIDTICDTLTQEIIRKGSI.

Positions 1 to 61 (MPNVKLPDGN…KEDCSLIIVT (61 aa)) constitute a TGS domain. The tract at residues 242–533 (DHRKLGKALD…LIEHYAGKLP (292 aa)) is catalytic. The Zn(2+) site is built by C333, H384, and H510.

The protein belongs to the class-II aminoacyl-tRNA synthetase family. In terms of assembly, homodimer. Zn(2+) serves as cofactor.

It is found in the cytoplasm. The catalysed reaction is tRNA(Thr) + L-threonine + ATP = L-threonyl-tRNA(Thr) + AMP + diphosphate + H(+). Functionally, catalyzes the attachment of threonine to tRNA(Thr) in a two-step reaction: L-threonine is first activated by ATP to form Thr-AMP and then transferred to the acceptor end of tRNA(Thr). Also edits incorrectly charged L-seryl-tRNA(Thr). The polypeptide is Threonine--tRNA ligase (Legionella pneumophila subsp. pneumophila (strain Philadelphia 1 / ATCC 33152 / DSM 7513)).